A 238-amino-acid polypeptide reads, in one-letter code: Tetraspanin-4 (238 aa).

Topologically, residues methionine 1–methionine 13 are cytoplasmic. A helical membrane pass occupies residues phenylalanine 14 to leucine 34. Topologically, residues alanine 35–asparagine 55 are extracellular. The chain crosses the membrane as a helical span at residues leucine 56 to leucine 76. The Cytoplasmic portion of the chain corresponds to lysine 77 to threonine 85. The chain crosses the membrane as a helical span at residues phenylalanine 86–alanine 106. Residues tyrosine 107 to asparagine 201 are Extracellular-facing. Asparagine 152 and asparagine 161 each carry an N-linked (GlcNAc...) asparagine glycan. A helical transmembrane segment spans residues leucine 202–phenylalanine 222. Over alanine 223–alanine 238 the chain is Cytoplasmic.

Belongs to the tetraspanin (TM4SF) family. Forms a complex with integrins.

Its subcellular location is the membrane. The chain is Tetraspanin-4 (Tspan4) from Mus musculus (Mouse).